A 311-amino-acid polypeptide reads, in one-letter code: LOB domain-containing protein 10 (311 aa).

The region spanning 4 to 105 (TPCAACKLLR…QDLLTAKEEL (102 aa)) is the LOB domain. Positions 264 to 277 (LQEGQEQTEEGQFL) are enriched in low complexity. The disordered stretch occupies residues 264-311 (LQEGQEQTEEGQFLMQPMGQENLHDEEEEEELEPPVKWRMSENKEASF). Positions 287–296 (HDEEEEEELE) are enriched in acidic residues. The span at 297 to 311 (PPVKWRMSENKEASF) shows a compositional bias: basic and acidic residues.

This sequence belongs to the LOB domain-containing protein family.

The chain is LOB domain-containing protein 10 (LBD10) from Arabidopsis thaliana (Mouse-ear cress).